The primary structure comprises 166 residues: Protein-export protein SecB (166 aa).

This sequence belongs to the SecB family. In terms of assembly, homotetramer, a dimer of dimers. One homotetramer interacts with 1 SecA dimer.

The protein resides in the cytoplasm. Functionally, one of the proteins required for the normal export of preproteins out of the cell cytoplasm. It is a molecular chaperone that binds to a subset of precursor proteins, maintaining them in a translocation-competent state. It also specifically binds to its receptor SecA. This chain is Protein-export protein SecB, found in Actinobacillus succinogenes (strain ATCC 55618 / DSM 22257 / CCUG 43843 / 130Z).